A 969-amino-acid chain; its full sequence is RNA polymerase-associated protein RapA (969 aa).

One can recognise a Helicase ATP-binding domain in the interval 164–334; it reads EVGRRHAPRV…FARLRLLDSD (171 aa). 177 to 184 contacts ATP; it reads DEVGLGKT. The DEAH box signature appears at 280–283; that stretch reads DEAH. In terms of domain architecture, Helicase C-terminal spans 492 to 668; the sequence is RVNWLLEKLK…GSNEALNDVI (177 aa).

It belongs to the SNF2/RAD54 helicase family. RapA subfamily. Interacts with the RNAP. Has a higher affinity for the core RNAP than for the holoenzyme. Its ATPase activity is stimulated by binding to RNAP.

Its function is as follows. Transcription regulator that activates transcription by stimulating RNA polymerase (RNAP) recycling in case of stress conditions such as supercoiled DNA or high salt concentrations. Probably acts by releasing the RNAP, when it is trapped or immobilized on tightly supercoiled DNA. Does not activate transcription on linear DNA. Probably not involved in DNA repair. The polypeptide is RNA polymerase-associated protein RapA (Vibrio vulnificus (strain YJ016)).